The sequence spans 316 residues: Phospho-N-acetylmuramoyl-pentapeptide-transferase (316 aa).

The next 10 membrane-spanning stretches (helical) occupy residues 5–25 (IIFA…FFIP), 52–72 (TMGG…FSPW), 76–96 (LFIL…DDFL), 116–136 (FLLA…EIIV), 145–165 (LANF…NSVN), 172–192 (GLAA…ALFL), 195–212 (VTYG…LGFL), 221–241 (VFMG…VALL), 244–264 (LPLI…SVIL), and 296–316 (VVYS…YSLS).

It belongs to the glycosyltransferase 4 family. MraY subfamily. Mg(2+) serves as cofactor.

It is found in the cell membrane. It carries out the reaction UDP-N-acetyl-alpha-D-muramoyl-L-alanyl-gamma-D-glutamyl-meso-2,6-diaminopimeloyl-D-alanyl-D-alanine + di-trans,octa-cis-undecaprenyl phosphate = di-trans,octa-cis-undecaprenyl diphospho-N-acetyl-alpha-D-muramoyl-L-alanyl-D-glutamyl-meso-2,6-diaminopimeloyl-D-alanyl-D-alanine + UMP. Its pathway is cell wall biogenesis; peptidoglycan biosynthesis. Its function is as follows. Catalyzes the initial step of the lipid cycle reactions in the biosynthesis of the cell wall peptidoglycan: transfers peptidoglycan precursor phospho-MurNAc-pentapeptide from UDP-MurNAc-pentapeptide onto the lipid carrier undecaprenyl phosphate, yielding undecaprenyl-pyrophosphoryl-MurNAc-pentapeptide, known as lipid I. The sequence is that of Phospho-N-acetylmuramoyl-pentapeptide-transferase from Caldanaerobacter subterraneus subsp. tengcongensis (strain DSM 15242 / JCM 11007 / NBRC 100824 / MB4) (Thermoanaerobacter tengcongensis).